A 188-amino-acid polypeptide reads, in one-letter code: MASYYSNDFRPGLKIMFEGEPYAVESSEFVKPGKGQAFARVKMRRLLTGGRVEKTFKSTDSLEGADVNDMNLTYLYNDGEFWHFMNNETYEQLQADAKAVGDNGKWLIDQAECIVTLWNGQPIAVTPPNFVELEIVDTDPGLKGDTAGTGGKPATLSTGAVVKVPLFVQVGEIIKVDTRSGEYVSRVK.

Lys-34 is modified (N6-(3,6-diaminohexanoyl)-5-hydroxylysine).

Belongs to the elongation factor P family. May be beta-lysylated on the epsilon-amino group of Lys-34 by the combined action of EpmA and EpmB, and then hydroxylated on the C5 position of the same residue by EpmC (if this protein is present). Lysylation is critical for the stimulatory effect of EF-P on peptide-bond formation. The lysylation moiety may extend toward the peptidyltransferase center and stabilize the terminal 3-CCA end of the tRNA. Hydroxylation of the C5 position on Lys-34 may allow additional potential stabilizing hydrogen-bond interactions with the P-tRNA.

Its subcellular location is the cytoplasm. Its pathway is protein biosynthesis; polypeptide chain elongation. Functionally, involved in peptide bond synthesis. Alleviates ribosome stalling that occurs when 3 or more consecutive Pro residues or the sequence PPG is present in a protein, possibly by augmenting the peptidyl transferase activity of the ribosome. Modification of Lys-34 is required for alleviation. This chain is Elongation factor P, found in Yersinia pseudotuberculosis serotype O:1b (strain IP 31758).